The primary structure comprises 1943 residues: Trichohyalin (1943 aa).

Residues 1 to 91 (MSPLLRSICD…AQACYYALGQ (91 aa)) are S-100-like. 2 EF-hand domains span residues 23 to 48 (CDGA…LRRP) and 49 to 84 (HDPK…VAQA). The Ca(2+) site is built by aspartate 32, aspartate 62, aspartate 64, asparagine 66, arginine 68, and glutamate 73. Disordered regions lie at residues 110-164 (LQDR…LEQR), 186-209 (RRAE…DEEQ), and 222-274 (GREE…LQEE). A compositionally biased stretch (basic and acidic residues) spans 197–209 (KGHETEEFPDEEQ). The 1-1; approximate repeat unit spans residues 314–326 (RREQQEERREQQE). The tract at residues 314–377 (RREQQEERRE…QEEERREQQL (64 aa)) is 5 X 13 AA tandem repeats of R-R-E-Q-E-E-E-R-R-E-Q-Q-L. One copy of the 1-2; approximate repeat lies at 327 to 339 (RREQQEERREQQL). The 1-3; approximate repeat unit spans residues 340–351 (RREQEERREQQL). Repeat copies occupy residues 352–364 (RREQ…EQQL), 365–377 (RREQ…EQQL), 378–383 (RREQQL), 384–389 (RREQQL), 390–395 (RREQQL), 396–401 (RREQQL), 402–407 (RREQQL), 408–413 (RREQQL), 414–419 (RREQQL), and 420–425 (RREQQL). The tract at residues 378–425 (RREQQLRREQQLRREQQLRREQQLRREQQLRREQQLRREQQLRREQQL) is 8 X 6 AA tandem repeats of R-R-E-Q-Q-L. Residues 425 to 683 (LRREQEEERH…REHEEERREQ (259 aa)) are 9 X 28 AA approximate tandem repeats. Disordered stretches follow at residues 426-485 (RREQ…EERR), 509-546 (REQE…EERR), 608-819 (ERLE…EKEQ), and 837-872 (EEQL…RRDQ). Composition is skewed to basic and acidic residues over residues 608–684 (ERLE…REQE), 724–781 (RKQE…ERGR), 789–812 (PLRE…RFLP), and 859–872 (DQER…RRDQ). 10 tandem repeats follow at residues 906–935 (LQEE…EEEQ), 936–965 (LQQE…KDKK), 966–995 (LQQK…EEEE), 996–1025 (LQQE…KKDE), 1026–1055 (LQQE…EEEE), 1056–1085 (LQQE…KEEE), 1086–1115 (LQQE…EEEE), 1116–1145 (LQQE…EEEE), 1146–1175 (VQQE…EEEE), and 1176–1204 (LQQE…EEEE). A 10 X 30 AA tandem repeats region spans residues 906-1204 (LQEEEEELQR…RERQYREEEE (299 aa)). A compositionally biased stretch (basic and acidic residues) spans 950 to 992 (KRRRQERERQYRKDKKLQQKEEQLLGEEPEKRRRQEREKKYRE). 9 disordered regions span residues 950 to 1000 (KRRR…QQEE), 1046 to 1120 (RERQ…QQEE), 1137 to 1162 (ERQY…EKRR), 1193 to 1371 (QERE…RHQE), 1404 to 1435 (REQQ…FREE), 1492 to 1691 (QQLR…ERDR), 1757 to 1820 (PERE…RDGK), 1834 to 1864 (EQRL…EQEL), and 1876 to 1928 (RERK…VRSS). The span at 1052–1064 (EEEELQQEEEQLL) shows a compositional bias: acidic residues. 2 stretches are compositionally biased toward basic and acidic residues: residues 1065-1085 (GEER…KEEE) and 1092-1111 (QLLR…RQCR). Residues 1142 to 1151 (EEEEVQQEEE) show a composition bias toward acidic residues. Positions 1152-1162 (QLLREEPEKRR) are enriched in basic and acidic residues. 2 stretches are compositionally biased toward basic and acidic residues: residues 1214-1263 (YRDE…DRQS) and 1274-1371 (QQER…RHQE). Residues 1292–1894 (HFPEEEQLER…IRRQQKEEQR (603 aa)) are 23 X 26 AA approximate tandem repeats. 3 stretches are compositionally biased toward basic and acidic residues: residues 1492–1524 (QQLR…EQQL), 1533–1673 (FLQE…REEE), and 1682–1691 (QQLRRQERDR). Positions 1876–1912 (RERKLREEHIRRQQKEEQRHRQVGEIKSQEGKGHGRL) are enriched in basic and acidic residues.

It belongs to the S100-fused protein family. In terms of assembly, monomer. In terms of processing, substrate of transglutaminase. Some 200 arginines are probably converted to citrullines by peptidylarginine deimidase. In terms of tissue distribution, found in the hard keratinizing tissues such as the inner root sheath (IRS) of hair follicles and medulla, and in the filiform papillae of dorsal tongue epithelium.

In terms of biological role, intermediate filament-associated protein that associates in regular arrays with keratin intermediate filaments (KIF) of the inner root sheath cells of the hair follicle and the granular layer of the epidermis. It later becomes cross-linked to KIF by isodipeptide bonds. It may serve as scaffold protein, together with involucrin, in the organization of the cell envelope or even anchor the cell envelope to the KIF network. It may be involved in its own calcium-dependent postsynthetic processing during terminal differentiation. The sequence is that of Trichohyalin (TCHH) from Homo sapiens (Human).